The chain runs to 635 residues: Glycosyltransferase-like protein gnt13 (635 aa).

The Cytoplasmic segment spans residues 1-18; the sequence is MNINTLIINFNKVKRMKN. Residues 19–38 form a helical; Signal-anchor for type II membrane protein membrane-spanning segment; the sequence is FLILTLLVVMVVVFLQGPTL. Topologically, residues 39 to 635 are extracellular; that stretch reads MINNSGQGMG…PNECFSDHHW (597 aa). Residues N41 and N179 are each glycosylated (N-linked (GlcNAc...) asparagine). Disordered regions lie at residues 300-358 and 389-458; these read NINN…NNID and NIDN…NNEP. Over residues 389–456 the composition is skewed to low complexity; the sequence is NIDNNNSNYN…NNNNNNNNNN (68 aa). N-linked (GlcNAc...) asparagine glycosylation is found at N393 and N535.

The protein belongs to the glycosyltransferase 8 family. Highly divergent.

It is found in the membrane. The sequence is that of Glycosyltransferase-like protein gnt13 (gnt13) from Dictyostelium discoideum (Social amoeba).